Here is a 216-residue protein sequence, read N- to C-terminus: MKINTVLFDLDGTLINTNELIISSFLHTLHTYYPNQYKREDVLPFIGPSLHDTFSKIDESKVEELITSYRQFNHDHHDELVEEYETVYETVQELKKQGYKVGIVTTKARQTVEMGLKLSKLDEFFDVVVTIDDVEHVKPHPEPLQKALQLLDAKPEEALMVGDNHHDIVGGQNAGTKTAAVSWTLKGRAYLETYKPDFMLDKMSDLLLILSDMNRS.

Asp-9 functions as the Nucleophile in the catalytic mechanism.

This sequence belongs to the HAD-like hydrolase superfamily. PpaX family. The cofactor is Mg(2+).

The catalysed reaction is diphosphate + H2O = 2 phosphate + H(+). In terms of biological role, hydrolyzes pyrophosphate formed during P-Ser-HPr dephosphorylation by HPrK/P. Might play a role in controlling the intracellular pyrophosphate pool. This Bacillus anthracis (strain A0248) protein is Pyrophosphatase PpaX.